The following is a 139-amino-acid chain: Large ribosomal subunit protein uL22 (139 aa).

The tract at residues 1-21 is disordered; it reads MTAPTPEFRNKKQRKQQVKLR.

This sequence belongs to the universal ribosomal protein uL22 family. As to quaternary structure, part of the 50S ribosomal subunit.

In terms of biological role, this protein binds specifically to 23S rRNA; its binding is stimulated by other ribosomal proteins, e.g. L4, L17, and L20. It is important during the early stages of 50S assembly. It makes multiple contacts with different domains of the 23S rRNA in the assembled 50S subunit and ribosome. Functionally, the globular domain of the protein is located near the polypeptide exit tunnel on the outside of the subunit, while an extended beta-hairpin is found that lines the wall of the exit tunnel in the center of the 70S ribosome. This is Large ribosomal subunit protein uL22 from Deinococcus deserti (strain DSM 17065 / CIP 109153 / LMG 22923 / VCD115).